The sequence spans 783 residues: Endonuclease MutS2 (783 aa).

328-335 (GPNTGGKT) is an ATP binding site. Positions 708–783 (LDLRGKRYEE…GSGCTIATLG (76 aa)) constitute a Smr domain.

The protein belongs to the DNA mismatch repair MutS family. MutS2 subfamily. Homodimer. Binds to stalled ribosomes, contacting rRNA.

Functionally, endonuclease that is involved in the suppression of homologous recombination and thus may have a key role in the control of bacterial genetic diversity. In terms of biological role, acts as a ribosome collision sensor, splitting the ribosome into its 2 subunits. Detects stalled/collided 70S ribosomes which it binds and splits by an ATP-hydrolysis driven conformational change. Acts upstream of the ribosome quality control system (RQC), a ribosome-associated complex that mediates the extraction of incompletely synthesized nascent chains from stalled ribosomes and their subsequent degradation. Probably generates substrates for RQC. In Streptococcus thermophilus (strain ATCC BAA-491 / LMD-9), this protein is Endonuclease MutS2.